We begin with the raw amino-acid sequence, 62 residues long: Large ribosomal subunit protein bL28 (62 aa).

The interval 1–26 (MARKCYVTGKSPKSGNNRSHALNKTK) is disordered. The segment covering 11 to 20 (SPKSGNNRSH) has biased composition (polar residues).

It belongs to the bacterial ribosomal protein bL28 family.

This is Large ribosomal subunit protein bL28 from Exiguobacterium sp. (strain ATCC BAA-1283 / AT1b).